Reading from the N-terminus, the 519-residue chain is Transmembrane protein 180 (519 aa).

Residues 1–11 (MGLDWPQAWLL) are Extracellular-facing. The helical transmembrane segment at 12 to 43 (GLPIAVVYGSLALFTSILHNVFLLYYVDTFVS) threads the bilayer. At 44–55 (VYKINKVSFWVG) the chain is on the cytoplasmic side. Residues 56–74 (ETVFLLWNSFNDPLFGWLS) traverse the membrane as a helical segment. Residues 75-100 (DRQLLSSQPRSGAGLSSRDVVLTRVR) are Extracellular-facing. A helical transmembrane segment spans residues 101-118 (ALGWHGPLLALSFLAFWV). At 119–126 (PWAPAGLQ) the chain is on the cytoplasmic side. A helical transmembrane segment spans residues 127 to 151 (FLLCLCLYDGFLTLVDLHHHALLAD). Residues 152–155 (LALS) lie on the Extracellular side of the membrane. Residues 156–179 (SHDRTHLNFYCSLFSAAGSLSVFA) traverse the membrane as a helical segment. Residues 180 to 191 (SYAFWNKEDFSS) are Cytoplasmic-facing. A helical membrane pass occupies residues 192-223 (FRAFCVVLAAGSGLGFLGTTQLLKRQIEATRR). At 224–264 (DRGCPGLDLDGGVCEEEPPVGGEEAGNITLGQYLRQLARHQ) the chain is on the extracellular side. An N-linked (GlcNAc...) asparagine glycan is attached at N250. A helical membrane pass occupies residues 265 to 292 (NFLWFVGMDLVQVFHCHFNSNFFPLFLE). The Cytoplasmic segment spans residues 293–305 (HLLSDHISLSTGS). A helical transmembrane segment spans residues 306–325 (FLLGISYVAPHLNNLYFLPL). The Extracellular portion of the chain corresponds to 326–330 (CRRWG). The helical transmembrane segment at 331–350 (VYAVVRGLFLLKLSLSLLML) threads the bilayer. The Cytoplasmic segment spans residues 351 to 358 (LAGPDHPG). Residues 359–393 (LLCFFIASNRVFTEGTCKLLTLVVTDLVDEDLVLN) form a helical membrane-spanning segment. At 394–402 (HRKQAASAL) the chain is on the extracellular side. The chain crosses the membrane as a helical span at residues 403–429 (LFGMVALVTKPGQTFAPLLGTWLLCFY). Topologically, residues 430–468 (TGHDLFQQSPMTPVGSVRPWPELPAPAPAPAQAPTLRQG) are cytoplasmic. A helical transmembrane segment spans residues 469–487 (CFYLLVFVPITCALLQLFT). Residues 488–519 (WSQFTLHGRRLRTVKAQRQNLAQIHTLNIKMV) lie on the Extracellular side of the membrane.

Its subcellular location is the cell membrane. This chain is Transmembrane protein 180, found in Mus musculus (Mouse).